Reading from the N-terminus, the 475-residue chain is Homeobox even-skipped homolog protein 2 (475 aa).

Disordered stretches follow at residues 82-113 and 155-189; these read PSSESTVSSEIASATESRKKPSHYSEAAAEAD and TSASGSGLGSLHGGGGGGNSGAAALGGSGSGSGAD. Residues 83-96 are compositionally biased toward low complexity; it reads SSESTVSSEIASAT. Over residues 160–186 the composition is skewed to gly residues; sequence SGLGSLHGGGGGGNSGAAALGGSGSGS. Residues 191 to 250 constitute a DNA-binding region (homeobox); sequence VRRYRTAFTREQIARLEKEFYRENYVSRPRRCELAAALNLPETTIKVWFQNRRMKDKRQR.

The protein belongs to the even-skipped homeobox family.

The protein resides in the nucleus. This Mus musculus (Mouse) protein is Homeobox even-skipped homolog protein 2 (Evx2).